A 349-amino-acid polypeptide reads, in one-letter code: 4-hydroxy-3-methylbut-2-en-1-yl diphosphate synthase (flavodoxin) (349 aa).

Residues Cys-264, Cys-267, Cys-299, and Glu-306 each contribute to the [4Fe-4S] cluster site.

The protein belongs to the IspG family. Requires [4Fe-4S] cluster as cofactor.

The enzyme catalyses (2E)-4-hydroxy-3-methylbut-2-enyl diphosphate + oxidized [flavodoxin] + H2O + 2 H(+) = 2-C-methyl-D-erythritol 2,4-cyclic diphosphate + reduced [flavodoxin]. It participates in isoprenoid biosynthesis; isopentenyl diphosphate biosynthesis via DXP pathway; isopentenyl diphosphate from 1-deoxy-D-xylulose 5-phosphate: step 5/6. In terms of biological role, converts 2C-methyl-D-erythritol 2,4-cyclodiphosphate (ME-2,4cPP) into 1-hydroxy-2-methyl-2-(E)-butenyl 4-diphosphate. The sequence is that of 4-hydroxy-3-methylbut-2-en-1-yl diphosphate synthase (flavodoxin) from Clostridium acetobutylicum (strain ATCC 824 / DSM 792 / JCM 1419 / IAM 19013 / LMG 5710 / NBRC 13948 / NRRL B-527 / VKM B-1787 / 2291 / W).